The chain runs to 734 residues: Amino-acid acetyltransferase, mitochondrial (734 aa).

A disordered region spans residues 384-433; the sequence is YSETSSRSTRAEADSNFNLRDDIPLSSFTEQKSGELEYSPRHQNDSPTQQ. Composition is skewed to basic and acidic residues over residues 392–406 and 415–427; these read TRAEADSNFNLRDDI and KSGELEYSPRHQN. Residues 555-724 form the N-acetyltransferase domain; it reads GVPQISLTDP…YEAVCKTIEP (170 aa).

Belongs to the acetyltransferase family.

It is found in the mitochondrion. It catalyses the reaction L-glutamate + acetyl-CoA = N-acetyl-L-glutamate + CoA + H(+). Its pathway is amino-acid biosynthesis; L-arginine biosynthesis; N(2)-acetyl-L-ornithine from L-glutamate: step 1/4. N-acetylglutamate synthase involved in arginine biosynthesis. The sequence is that of Amino-acid acetyltransferase, mitochondrial (arg2) from Botryotinia fuckeliana (strain B05.10) (Noble rot fungus).